The sequence spans 754 residues: 5-methyltetrahydropteroyltriglutamate--homocysteine methyltransferase (754 aa).

5-methyltetrahydropteroyltri-L-glutamate contacts are provided by residues 17–20 (RELK) and lysine 117. L-homocysteine is bound by residues 431 to 433 (IGS) and glutamate 484. Residues 431 to 433 (IGS) and glutamate 484 each bind L-methionine. 5-methyltetrahydropteroyltri-L-glutamate-binding positions include 515–516 (RC) and tryptophan 561. Aspartate 599 provides a ligand contact to L-homocysteine. Aspartate 599 contacts L-methionine. Position 605 (glutamate 605) interacts with 5-methyltetrahydropteroyltri-L-glutamate. The Zn(2+) site is built by histidine 641, cysteine 643, and glutamate 665. Catalysis depends on histidine 694, which acts as the Proton donor. Cysteine 726 is a binding site for Zn(2+).

This sequence belongs to the vitamin-B12 independent methionine synthase family. It depends on Zn(2+) as a cofactor.

It catalyses the reaction 5-methyltetrahydropteroyltri-L-glutamate + L-homocysteine = tetrahydropteroyltri-L-glutamate + L-methionine. It functions in the pathway amino-acid biosynthesis; L-methionine biosynthesis via de novo pathway; L-methionine from L-homocysteine (MetE route): step 1/1. Functionally, catalyzes the transfer of a methyl group from 5-methyltetrahydrofolate to homocysteine resulting in methionine formation. The polypeptide is 5-methyltetrahydropteroyltriglutamate--homocysteine methyltransferase (Klebsiella pneumoniae subsp. pneumoniae (strain ATCC 700721 / MGH 78578)).